The primary structure comprises 89 residues: Cell division topological specificity factor (89 aa).

This sequence belongs to the MinE family.

Prevents the cell division inhibition by proteins MinC and MinD at internal division sites while permitting inhibition at polar sites. This ensures cell division at the proper site by restricting the formation of a division septum at the midpoint of the long axis of the cell. The polypeptide is Cell division topological specificity factor (Yersinia pestis bv. Antiqua (strain Angola)).